Consider the following 249-residue polypeptide: Proteasome activator complex subunit 1 (249 aa).

The tract at residues 55-102 (SNLKAPLDIPVPDPVKEKEKEERRKQQEKEDKDEKKKGEDEDKGPPCG) is disordered. Residues 68-98 (PVKEKEKEERRKQQEKEDKDEKKKGEDEDKG) show a composition bias toward basic and acidic residues.

The protein belongs to the PA28 family. As to quaternary structure, heterodimer of PSME1 and PSME2, which forms a hexameric ring. PSME1 can form homoheptamers.

Functionally, implicated in immunoproteasome assembly and required for efficient antigen processing. The PA28 activator complex enhances the generation of class I binding peptides by altering the cleavage pattern of the proteasome. The polypeptide is Proteasome activator complex subunit 1 (PSME1) (Bos taurus (Bovine)).